A 160-amino-acid polypeptide reads, in one-letter code: Nuclear transcription factor Y subunit B-5 (160 aa).

The DNA-binding element occupies 56 to 62 (LPIANVG). Residues 83–94 (MQECVSEFISFV) form a subunit association domain (SAD) region.

This sequence belongs to the NFYB/HAP3 subunit family. In terms of assembly, heterotrimeric transcription factor composed of three components, NF-YA, NF-YB and NF-YC. NF-YB and NF-YC must interact and dimerize for NF-YA association and DNA binding. In terms of tissue distribution, expressed in flowers and siliques.

The protein localises to the nucleus. Functionally, component of the NF-Y/HAP transcription factor complex. The NF-Y complex stimulates the transcription of various genes by recognizing and binding to a CCAAT motif in promoters. This is Nuclear transcription factor Y subunit B-5 (NFYB5) from Arabidopsis thaliana (Mouse-ear cress).